Consider the following 259-residue polypeptide: MDTLNIAGKHYNSRLLVGTGKYKDFEQTRAAIDASGAEIITVAIRRTNIGQNAGEPSLLDYLPPEEFTYLPNTAGCYSAEDAVRTLRLARELLDGHKLVKLEVLGDPNTLYPNMLETIKAAETLIKDGFDVMVYCSDDPIIAKQLEDMGCAAVMPLASLIGSGMGILNPWNLQIIIENAKIPVLVDAGVGTASDAAIAMELGCQGVLMNTAIAAAKDPVLMAGAMKKAVEAGREAFLAGRMPRKLYSASPSSPTSGLIG.

The Schiff-base intermediate with DXP role is filled by lysine 100. Residues glycine 161, 187 to 188 (AG), and 209 to 210 (NT) each bind 1-deoxy-D-xylulose 5-phosphate.

Belongs to the ThiG family. Homotetramer. Forms heterodimers with either ThiH or ThiS.

The protein resides in the cytoplasm. It catalyses the reaction [ThiS sulfur-carrier protein]-C-terminal-Gly-aminoethanethioate + 2-iminoacetate + 1-deoxy-D-xylulose 5-phosphate = [ThiS sulfur-carrier protein]-C-terminal Gly-Gly + 2-[(2R,5Z)-2-carboxy-4-methylthiazol-5(2H)-ylidene]ethyl phosphate + 2 H2O + H(+). It participates in cofactor biosynthesis; thiamine diphosphate biosynthesis. In terms of biological role, catalyzes the rearrangement of 1-deoxy-D-xylulose 5-phosphate (DXP) to produce the thiazole phosphate moiety of thiamine. Sulfur is provided by the thiocarboxylate moiety of the carrier protein ThiS. In vitro, sulfur can be provided by H(2)S. The protein is Thiazole synthase of Methylobacillus flagellatus (strain ATCC 51484 / DSM 6875 / VKM B-1610 / KT).